We begin with the raw amino-acid sequence, 233 residues long: Orotidine 5'-phosphate decarboxylase (233 aa).

Substrate-binding positions include Asp11, Lys34, 61–70 (DLKLHDIPNT), Thr117, Arg179, Gln189, Gly209, and Arg210. The active-site Proton donor is the Lys63.

This sequence belongs to the OMP decarboxylase family. Type 1 subfamily. In terms of assembly, homodimer.

It carries out the reaction orotidine 5'-phosphate + H(+) = UMP + CO2. It participates in pyrimidine metabolism; UMP biosynthesis via de novo pathway; UMP from orotate: step 2/2. Catalyzes the decarboxylation of orotidine 5'-monophosphate (OMP) to uridine 5'-monophosphate (UMP). The protein is Orotidine 5'-phosphate decarboxylase of Streptococcus agalactiae serotype V (strain ATCC BAA-611 / 2603 V/R).